Reading from the N-terminus, the 362-residue chain is UDP-N-acetylglucosamine--N-acetylmuramyl-(pentapeptide) pyrophosphoryl-undecaprenol N-acetylglucosamine transferase (362 aa).

Residues 15-17 (TGG), asparagine 127, arginine 165, serine 191, isoleucine 247, 266-271 (ALTVSE), and glutamine 292 each bind UDP-N-acetyl-alpha-D-glucosamine.

It belongs to the glycosyltransferase 28 family. MurG subfamily.

The protein resides in the cell inner membrane. It carries out the reaction di-trans,octa-cis-undecaprenyl diphospho-N-acetyl-alpha-D-muramoyl-L-alanyl-D-glutamyl-meso-2,6-diaminopimeloyl-D-alanyl-D-alanine + UDP-N-acetyl-alpha-D-glucosamine = di-trans,octa-cis-undecaprenyl diphospho-[N-acetyl-alpha-D-glucosaminyl-(1-&gt;4)]-N-acetyl-alpha-D-muramoyl-L-alanyl-D-glutamyl-meso-2,6-diaminopimeloyl-D-alanyl-D-alanine + UDP + H(+). It participates in cell wall biogenesis; peptidoglycan biosynthesis. Its function is as follows. Cell wall formation. Catalyzes the transfer of a GlcNAc subunit on undecaprenyl-pyrophosphoryl-MurNAc-pentapeptide (lipid intermediate I) to form undecaprenyl-pyrophosphoryl-MurNAc-(pentapeptide)GlcNAc (lipid intermediate II). The polypeptide is UDP-N-acetylglucosamine--N-acetylmuramyl-(pentapeptide) pyrophosphoryl-undecaprenol N-acetylglucosamine transferase (Shewanella putrefaciens (strain CN-32 / ATCC BAA-453)).